A 96-amino-acid polypeptide reads, in one-letter code: uncharacterized protein (96 aa).

The next 2 helical transmembrane spans lie at 27–47 (LAFRISELFLIFSIPLFALLI) and 50–70 (LSGVNRVLMFFILVYYISIVF).

It localises to the cell membrane. This is an uncharacterized protein from Haemophilus influenzae (strain ATCC 51907 / DSM 11121 / KW20 / Rd).